The following is a 379-amino-acid chain: DnaJ homolog subfamily B member 14 (379 aa).

The Cytoplasmic segment spans residues 1-244; the sequence is MEGNRDEAEK…GHEREEERAD (244 aa). Residues 56–90 form a disordered region; that stretch reads TAGSSTHCRKPPGSSDQSKPSCGKDGTSGAGEGGK. In terms of domain architecture, J spans 108-172; it reads NYYEVLGVTK…EKRKQYDLTG (65 aa). Residues 245–265 traverse the membrane as a helical segment; it reads GGFSVFIQLMPIIVLILVSLL. At 266–379 the chain is on the lumenal side; sequence SQLMVSNPPY…ERLTSLYKGG (114 aa).

It belongs to the DnaJ family. DNAJB12/DNAJB14 subfamily. Interacts (via J domain) with HSPA8/Hsc70. Forms a multiprotein complex, at least composed of DNAJB12, DNAJB14, HSPA8/Hsc70 and SGTA; interaction with DNAJB14 and HSPA8/Hsc70 is direct.

It localises to the endoplasmic reticulum membrane. It is found in the nucleus membrane. In terms of biological role, acts as a co-chaperone with HSPA8/Hsc70; required to promote protein folding and trafficking, prevent aggregation of client proteins, and promote unfolded proteins to endoplasmic reticulum-associated degradation (ERAD) pathway. Acts by determining HSPA8/Hsc70's ATPase and polypeptide-binding activities. Can also act independently of HSPA8/Hsc70: together with DNAJB12, acts as a chaperone that promotes maturation of potassium channels KCND2 and KCNH2 by stabilizing nascent channel subunits and assembling them into tetramers. While stabilization of nascent channel proteins is dependent on HSPA8/Hsc70, the process of oligomerization of channel subunits is independent of HSPA8/Hsc70. When overexpressed, forms membranous structures together with DNAJB12 and HSPA8/Hsc70 within the nucleus; the role of these structures, named DJANGOs, is still unclear. This is DnaJ homolog subfamily B member 14 from Mus musculus (Mouse).